The chain runs to 127 residues: Glycine cleavage system H protein (127 aa).

The 82-residue stretch at 23–104 (TALVGLTDYA…PYEAWFAKIT (82 aa)) folds into the Lipoyl-binding domain. Lys-64 is modified (N6-lipoyllysine).

It belongs to the GcvH family. In terms of assembly, the glycine cleavage system is composed of four proteins: P, T, L and H. (R)-lipoate is required as a cofactor.

Functionally, the glycine cleavage system catalyzes the degradation of glycine. The H protein shuttles the methylamine group of glycine from the P protein to the T protein. In Lachnoclostridium phytofermentans (strain ATCC 700394 / DSM 18823 / ISDg) (Clostridium phytofermentans), this protein is Glycine cleavage system H protein.